Here is a 256-residue protein sequence, read N- to C-terminus: DNA repair protein RecO (256 aa).

It belongs to the RecO family.

Functionally, involved in DNA repair and RecF pathway recombination. The protein is DNA repair protein RecO of Rhizobium leguminosarum bv. trifolii (strain WSM2304).